A 349-amino-acid chain; its full sequence is Crinkler effector protein 5 (349 aa).

Residues 1–17 (MVKLFCSIVGVAGSPFS) form the signal peptide. The LQLFLAK domain stretch occupies residues 18–57 (VEVNEGKTVDDLKKAIKAENLDDPTLRNVAPKNLQLFLAK). Residues 58–108 (KGDAWLRYNEDLDTYLQSEIDTSSYLHMRASWKLSKPTLFGPDVSLGEDVV) are DWL domain. Residues 109–115 (HVLVVVP) carry the HVLVXXP motif motif.

It belongs to the Crinkler effector family.

The protein localises to the secreted. It is found in the host nucleus. Secreted effector that elicits necrosis in host plants, a characteristic of plant innate immunity. The polypeptide is Crinkler effector protein 5 (Phytophthora infestans (Potato late blight agent)).